The sequence spans 1449 residues: uncharacterized protein (1449 aa).

A compositionally biased stretch (basic and acidic residues) spans 1–13 (MELRSDASHKENV). Disordered regions lie at residues 1–32 (MELRSDASHKENVSPKPAALPKPEQRRFRRSL), 123–201 (SNLS…LRSW), 258–298 (APQE…RRRR), 315–437 (LSDS…NKAQ), 523–551 (KQVQPHMQAGPGSPPSRRAQGKGLSLGRS), 1257–1278 (DQGPRAHSSPEPRACKAQSKAH), and 1399–1449 (RLAA…QLQL). Residues 123–133 (SNLSINETSSP) are compositionally biased toward polar residues. 2 stretches are compositionally biased toward polar residues: residues 315-333 (LSDSWAQSKLMSPETTLGT) and 384-394 (PCSSAFSNTAW). A compositionally biased stretch (basic and acidic residues) spans 400–419 (QKGEEGAPRERVHREEERTA). Over residues 426-437 (VPASSASKNKAQ) the composition is skewed to polar residues. The span at 1258–1270 (QGPRAHSSPEPRA) shows a compositional bias: basic and acidic residues.

This is an uncharacterized protein from Homo sapiens (Human).